The primary structure comprises 256 residues: Glutamate racemase (256 aa).

Substrate contacts are provided by residues 5–6 and 37–38; these read DS and YG. Catalysis depends on C69, which acts as the Proton donor/acceptor. A substrate-binding site is contributed by 70–71; sequence NT. Residue C181 is the Proton donor/acceptor of the active site. 182-183 contributes to the substrate binding site; sequence TH.

The protein belongs to the aspartate/glutamate racemases family.

It carries out the reaction L-glutamate = D-glutamate. It participates in cell wall biogenesis; peptidoglycan biosynthesis. Functionally, provides the (R)-glutamate required for cell wall biosynthesis. This chain is Glutamate racemase, found in Buchnera aphidicola subsp. Schizaphis graminum (strain Sg).